Consider the following 280-residue polypeptide: Large ribosomal subunit protein uL2 (280 aa).

The tract at residues 213–280 is disordered; sequence RWKGKRPSVR…RRRTGKKHAR (68 aa). Basic residues predominate over residues 268 to 280; sequence IVRRRRTGKKHAR.

This sequence belongs to the universal ribosomal protein uL2 family. Part of the 50S ribosomal subunit. Forms a bridge to the 30S subunit in the 70S ribosome.

Its function is as follows. One of the primary rRNA binding proteins. Required for association of the 30S and 50S subunits to form the 70S ribosome, for tRNA binding and peptide bond formation. It has been suggested to have peptidyltransferase activity; this is somewhat controversial. Makes several contacts with the 16S rRNA in the 70S ribosome. The polypeptide is Large ribosomal subunit protein uL2 (Mycobacterium leprae (strain Br4923)).